Reading from the N-terminus, the 221-residue chain is Probable endo-1,4-beta-xylanase B (221 aa).

An N-terminal signal peptide occupies residues 1–19 (MVSFSSLALALSTVVGVLA). Positions 33–221 (QLTHSQTGTK…SSGSATMTVS (189 aa)) constitute a GH11 domain. The active-site Nucleophile is the Glu-117. Glu-208 (proton donor) is an active-site residue.

This sequence belongs to the glycosyl hydrolase 11 (cellulase G) family.

It localises to the secreted. The catalysed reaction is Endohydrolysis of (1-&gt;4)-beta-D-xylosidic linkages in xylans.. It participates in glycan degradation; xylan degradation. Endo-1,4-beta-xylanase involved in the hydrolysis of xylan, a major structural heterogeneous polysaccharide found in plant biomass representing the second most abundant polysaccharide in the biosphere, after cellulose. This chain is Probable endo-1,4-beta-xylanase B (xlnB), found in Aspergillus clavatus (strain ATCC 1007 / CBS 513.65 / DSM 816 / NCTC 3887 / NRRL 1 / QM 1276 / 107).